A 633-amino-acid chain; its full sequence is CDK5 and ABL1 enzyme substrate 1 (633 aa).

The segment covering 1 to 29 (MAAAAAAATTAACSSGSAGTDAAGASGLQ) has biased composition (low complexity). A disordered region spans residues 1-99 (MAAAAAAATT…EGGAAKPGAG (99 aa)). Residues 1 to 109 (MAAAAAAATT…GACGARTRFS (109 aa)) are interaction with TDRD7. Basic and acidic residues predominate over residues 51–61 (PPRKPRMDPRR). Phosphoserine is present on residues serine 168 and serine 287. Residues 179–492 (QWQPPRPAPL…TTVIDYVKPS (314 aa)) are interaction with CDK3. At serine 313 the chain carries Phosphoserine; by CDK2 and CDK3. Threonine 415 carries the phosphothreonine modification.

It belongs to the cyclin family. As to quaternary structure, found in a complex with p53/TP53. Found in a number of complexes with CDK2, CDK3, CDK5, ABL1, TDRD7, CDK17, CCNA1, CCNE1 and TP73. Interacts with CDK2, CDK3, CDK5, ABL1 and TDRD7. Phosphorylated on Ser-313 by CCNE1/CDK3. Phosphorylated on serine/threonine residues by CDK5 and on tyrosine residues by ABL1. Also phosphorylated in vitro by CCNA1/CDK2, CCNE1/CDK2, CCNA1/CDK3 and CCNE1/CDK3. Expressed in breast, pancreas, colon, head and neck (at protein level). Strongly decreased in more than half of cases of atypical endometrial hyperplasia and in more than 90% of endometrial cancers.

The protein localises to the nucleus. Its subcellular location is the cytoplasm. Functionally, cyclin-dependent kinase binding protein. Enhances cyclin-dependent kinase tyrosine phosphorylation by nonreceptor tyrosine kinases, such as that of CDK5 by activated ABL1, which leads to increased CDK5 activity and is critical for neuronal development, and that of CDK2 by WEE1, which leads to decreased CDK2 activity and growth inhibition. Positively affects neuronal outgrowth. Plays a role as a regulator for p53/p73-induced cell death. The chain is CDK5 and ABL1 enzyme substrate 1 (CABLES1) from Homo sapiens (Human).